Here is a 156-residue protein sequence, read N- to C-terminus: Small ribosomal subunit protein uS7 (156 aa).

This sequence belongs to the universal ribosomal protein uS7 family. In terms of assembly, part of the 30S ribosomal subunit. Contacts proteins S9 and S11.

Its function is as follows. One of the primary rRNA binding proteins, it binds directly to 16S rRNA where it nucleates assembly of the head domain of the 30S subunit. Is located at the subunit interface close to the decoding center, probably blocks exit of the E-site tRNA. The sequence is that of Small ribosomal subunit protein uS7 (rpsG) from Geobacillus stearothermophilus (Bacillus stearothermophilus).